The chain runs to 392 residues: 2-oxoisovalerate dehydrogenase subunit beta, mitochondrial (392 aa).

The N-terminal 50 residues, methionine 1–glutamine 50, are a transit peptide targeting the mitochondrion. Tyrosine 152 serves as a coordination point for thiamine diphosphate. Residues glycine 178, leucine 180, threonine 181, cysteine 228, and aspartate 231 each coordinate K(+). Lysine 232 is subject to N6-acetyllysine. Asparagine 233 serves as a coordination point for K(+). Lysine 241 is subject to N6-acetyllysine.

In terms of assembly, heterotetramer of 2 alpha/BCKDHA and 2 beta chains/BCKDHB that forms the branched-chain alpha-keto acid decarboxylase (E1) component of the BCKD complex. The branched-chain alpha-ketoacid dehydrogenase is a large complex composed of three major building blocks E1, E2 and E3. It is organized around E2, a 24-meric cubic core composed of DBT, to which are associated 6 to 12 copies of E1, and approximately 6 copies of the dehydrogenase E3, a DLD dimer. The cofactor is thiamine diphosphate.

It is found in the mitochondrion matrix. It catalyses the reaction N(6)-[(R)-lipoyl]-L-lysyl-[protein] + 3-methyl-2-oxobutanoate + H(+) = N(6)-[(R)-S(8)-2-methylpropanoyldihydrolipoyl]-L-lysyl-[protein] + CO2. In terms of biological role, together with BCKDHA forms the heterotetrameric E1 subunit of the mitochondrial branched-chain alpha-ketoacid dehydrogenase (BCKD) complex. The BCKD complex catalyzes the multi-step oxidative decarboxylation of alpha-ketoacids derived from the branched-chain amino-acids valine, leucine and isoleucine producing CO2 and acyl-CoA which is subsequently utilized to produce energy. The E1 subunit catalyzes the first step with the decarboxylation of the alpha-ketoacid forming an enzyme-product intermediate. A reductive acylation mediated by the lipoylamide cofactor of E2 extracts the acyl group from the E1 active site for the next step of the reaction. In Homo sapiens (Human), this protein is 2-oxoisovalerate dehydrogenase subunit beta, mitochondrial.